The primary structure comprises 135 residues: Transcription antitermination protein NusB (135 aa).

This sequence belongs to the NusB family.

Functionally, involved in transcription antitermination. Required for transcription of ribosomal RNA (rRNA) genes. Binds specifically to the boxA antiterminator sequence of the ribosomal RNA (rrn) operons. This is Transcription antitermination protein NusB from Shewanella pealeana (strain ATCC 700345 / ANG-SQ1).